The chain runs to 1068 residues: Phosphatidylinositol 4,5-bisphosphate 3-kinase catalytic subunit alpha isoform (1068 aa).

The PI3K-ABD domain maps to 16–105 (MPPRILVECL…QPFLKVIEPV (90 aa)). The PI3K-RBD domain maps to 187–289 (KGQIIVVIWV…GRMPNLMLMA (103 aa)). Positions 330–487 (INSALRIKIL…DWFSSVVKFP (158 aa)) constitute a C2 PI3K-type domain. Residues 517 to 694 (LARDNELREN…GLLLESYCRA (178 aa)) enclose the PIK helical domain. Residues 765-1051 (RLEECRIMSS…QMNDAHHGGW (287 aa)) enclose the PI3K/PI4K catalytic domain. Residues 771 to 777 (IMSSAKR) form a G-loop region. Residues 912 to 920 (GIGDRHNSN) form a catalytic loop region. Positions 931–957 (HIDFGHFLDHKKKKFGYKRERVPFVLT) are activation loop.

Belongs to the PI3/PI4-kinase family. In terms of assembly, heterodimer of a catalytic subunit PIK3CA and a p85 regulatory subunit (PIK3R1, PIK3R2 or PIK3R3). Interacts with IRS1 in nuclear extracts. Interacts with RUFY3. Interacts with RASD2. Interacts with APPL1. Interacts with HRAS and KRAS. Interaction with HRAS/KRAS is required for PI3K pathway signaling and cell proliferation stimulated by EGF and FGF2. Interacts with FAM83B; activates the PI3K/AKT signaling cascade.

The catalysed reaction is L-seryl-[protein] + ATP = O-phospho-L-seryl-[protein] + ADP + H(+). It carries out the reaction a 1,2-diacyl-sn-glycero-3-phospho-(1D-myo-inositol) + ATP = a 1,2-diacyl-sn-glycero-3-phospho-(1D-myo-inositol-3-phosphate) + ADP + H(+). It catalyses the reaction a 1,2-diacyl-sn-glycero-3-phospho-(1D-myo-inositol-4,5-bisphosphate) + ATP = a 1,2-diacyl-sn-glycero-3-phospho-(1D-myo-inositol-3,4,5-trisphosphate) + ADP + H(+). The enzyme catalyses 1,2-dioctanoyl-sn-glycero-3-phospho-(1D-myo-inositol-4,5-bisphosphate) + ATP = 1,2-dioctanoyl-sn-glycero-3-phospho-(1D-myo-inositol-3,4,5-trisphosphate) + ADP + H(+). The catalysed reaction is 1-octadecanoyl-2-(5Z,8Z,11Z,14Z)-eicosatetraenoyl-sn-glycero-3-phospho-1D-myo-inositol 4,5-bisphosphate + ATP = 1-octadecanoyl-2-(5Z,8Z,11Z,14Z-eicosatetraenoyl)-sn-glycero-3-phospho-(1D-myo-inositol 3,4,5-triphosphate) + ADP + H(+). It functions in the pathway phospholipid metabolism; phosphatidylinositol phosphate biosynthesis. Phosphoinositide-3-kinase (PI3K) phosphorylates phosphatidylinositol (PI) and its phosphorylated derivatives at position 3 of the inositol ring to produce 3-phosphoinositides. Uses ATP and PtdIns(4,5)P2 (phosphatidylinositol 4,5-bisphosphate) to generate phosphatidylinositol 3,4,5-trisphosphate (PIP3). PIP3 plays a key role by recruiting PH domain-containing proteins to the membrane, including AKT1 and PDPK1, activating signaling cascades involved in cell growth, survival, proliferation, motility and morphology. Participates in cellular signaling in response to various growth factors. Involved in the activation of AKT1 upon stimulation by receptor tyrosine kinases ligands such as EGF, insulin, IGF1, VEGFA and PDGF. Involved in signaling via insulin-receptor substrate (IRS) proteins. Essential in endothelial cell migration during vascular development through VEGFA signaling, possibly by regulating RhoA activity. Required for lymphatic vasculature development, possibly by binding to RAS and by activation by EGF and FGF2, but not by PDGF. Regulates invadopodia formation through the PDPK1-AKT1 pathway. Participates in cardiomyogenesis in embryonic stem cells through a AKT1 pathway. Participates in vasculogenesis in embryonic stem cells through PDK1 and protein kinase C pathway. In addition to its lipid kinase activity, it displays a serine-protein kinase activity that results in the autophosphorylation of the p85alpha regulatory subunit as well as phosphorylation of other proteins such as 4EBP1, H-Ras, the IL-3 beta c receptor and possibly others. Plays a role in the positive regulation of phagocytosis and pinocytosis. This chain is Phosphatidylinositol 4,5-bisphosphate 3-kinase catalytic subunit alpha isoform (PIK3CA), found in Bos taurus (Bovine).